Consider the following 290-residue polypeptide: ORF2/4 protein (290 aa).

Residues 67 to 218 (LPAAPEAPGD…KSRYQPYLVT (152 aa)) are disordered. Residues 121 to 130 (RPQETQEGHR) are compositionally biased toward basic and acidic residues. A compositionally biased stretch (low complexity) spans 181 to 190 (AAQAAAAATA). Polar residues predominate over residues 191–200 (NPGSQTQTPV).

The sequence is that of ORF2/4 protein from Torque teno virus (isolate Human/Japan/TRM1/1999) (TTV).